Reading from the N-terminus, the 465-residue chain is Cysteine--tRNA ligase (465 aa).

Residue cysteine 27 participates in Zn(2+) binding. A 'HIGH' region motif is present at residues 29 to 39 (PTVYNFFHIGN). Positions 207, 232, and 236 each coordinate Zn(2+). The 'KMSKS' region signature appears at 264–268 (KMSKS). Lysine 267 is a binding site for ATP.

This sequence belongs to the class-I aminoacyl-tRNA synthetase family. Monomer. Zn(2+) is required as a cofactor.

The protein resides in the cytoplasm. It catalyses the reaction tRNA(Cys) + L-cysteine + ATP = L-cysteinyl-tRNA(Cys) + AMP + diphosphate. The sequence is that of Cysteine--tRNA ligase from Clostridium botulinum (strain Kyoto / Type A2).